The primary structure comprises 493 residues: Probable GTP-binding protein OBGM, mitochondrial (493 aa).

A mitochondrion-targeting transit peptide spans 1-28 (MWLIRAIVPVRYLGSYKRPQKPPWMRNP). The 256-residue stretch at 48–303 (TRMRDRFTLY…AVLILELKSI (256 aa)) folds into the Obg domain. Disordered regions lie at residues 65-89 (SGCS…GGRG) and 146-215 (GEIP…EDDD). Residues 187-196 (SESDQDDTEQ) are compositionally biased toward acidic residues. Residues 304-476 (ADVGLVGMPN…LKDGLKMLVD (173 aa)) form the OBG-type G domain. Residues 310-317 (GMPNAGKS) and 356-360 (DIPGL) contribute to the GTP site.

It belongs to the TRAFAC class OBG-HflX-like GTPase superfamily. OBG GTPase family.

The protein localises to the mitochondrion. May bind GTP and have GTPase activity. The polypeptide is Probable GTP-binding protein OBGM, mitochondrial (ATOBGM) (Arabidopsis thaliana (Mouse-ear cress)).